Reading from the N-terminus, the 153-residue chain is Peptide methionine sulfoxide reductase MsrA (153 aa).

Cys-10 is a catalytic residue.

It belongs to the MsrA Met sulfoxide reductase family.

It carries out the reaction L-methionyl-[protein] + [thioredoxin]-disulfide + H2O = L-methionyl-(S)-S-oxide-[protein] + [thioredoxin]-dithiol. The catalysed reaction is [thioredoxin]-disulfide + L-methionine + H2O = L-methionine (S)-S-oxide + [thioredoxin]-dithiol. Functionally, has an important function as a repair enzyme for proteins that have been inactivated by oxidation. Catalyzes the reversible oxidation-reduction of methionine sulfoxide in proteins to methionine. The sequence is that of Peptide methionine sulfoxide reductase MsrA from Methanococcoides burtonii (strain DSM 6242 / NBRC 107633 / OCM 468 / ACE-M).